The chain runs to 535 residues: Pyrichalasin C-18 hydroxylase (535 aa).

The helical transmembrane segment at 42-62 (LPSGTLIVLAALSLALLVAVL) threads the bilayer. 2 N-linked (GlcNAc...) asparagine glycosylation sites follow: asparagine 139 and asparagine 222. A heme-binding site is contributed by cysteine 479.

It belongs to the cytochrome P450 family. Heme is required as a cofactor.

The protein resides in the membrane. It functions in the pathway mycotoxin biosynthesis. Cytochrome P450 monooxygenase; part of the gene cluster that mediates the biosynthesis of the mycotoxin pyrichalasin H, a tyrosine-derived cytochalasan that inhibits the growth of rice seedlings, but also inhibits lymphocyte capping and actin polymerization and alters cell morphology. Pyrichalasin H is indicated as the responsible agent for the genus-specific pathogenicity of M.grisea toward crabgrass. The first step in the pathway is catalyzed by the O-methyltransferase pyiA which methylates free tyrosine to generate the precursor O-methyltyrosine. The hybrid PKS-NRPS pyiS, assisted by the enoyl reductase pyiC, are responsible for fusion of the O-methyltyrosine precursor and the polyketide backbone. The polyketide synthase module (PKS) of pyiS is responsible for the synthesis of the polyketide backbone and the downstream nonribosomal peptide synthetase (NRPS) amidates the carboxyl end of the polyketide with the O-methyltyrosine precursor. As the NRPS A-domain demonstrates substrate tolerance, pyiS can also use phenylalanine, tyrosine and even para-chlorophenylalanine as amino acid precursor, which leads to the production of novel cytochalasans, including halogenated cytochalasans. Because pyiS lacks a designated enoylreductase (ER) domain, the required activity is provided the enoyl reductase pyiC. Reduction by the hydrolyase pyiE leads to 1,5-dihydropyrrolone, which is substrate for dehydration and intra-molecular Diels-Alder cyclization by the Diels-Alderase pyiF to yield the required isoindolone-fused macrocycle. The tailoring cytochrome P450 monooxygenases piyD and piyG catalyze the hydroxylation at C-18 and C-7, respectivily, whereas the short-chain dehydrogenase/reductase pyiH reduces the carbonyl at C-21 in preparation for the transfer of an acetyl group by the acetyltransferase pyiB. These 3 reactions whose order is not clear yet, lead to the production of O-methylpyrichalasin J, a deacetylated pyrichalasin H. Finally, pyiB to converts O-methylpyrichalasin J into the final product pyrichalasin H via acetylation of C-21. The protein is Pyrichalasin C-18 hydroxylase of Pyricularia grisea (Crabgrass-specific blast fungus).